The following is a 337-amino-acid chain: MGGEVSNKTWVFKKSPSSLPEPGVHTAFEDRPLSLVAPPGGLVIKLLTAGLDPHQRDRMRGAGNVDYVPGYEVNEPITNFSIAKVIRSDNDVFEEGSLIAGSLPIAEYGIIPRELIDARAMASPLVWKVSNDYNLDVKHYVGTLGLAGMTAWNSFYGLVKAVKGETIWVNAASSSVGEVVVQLAKIEGMKVIASVSSDDKLDYVVNELGADVGFNYRKEPVGKALKPAIENMKWFGRIISCGTASQYNKPVEEQYGVTNLSEIFRRRIKIQGFIFWDDNIYTDNIENFKATMPKWVSEGKIKSRYTQFEGIEQADKAFLSMFTGGSHGKTVLKISDP.

It belongs to the zinc-containing alcohol dehydrogenase family. Quinone oxidoreductase subfamily.

It participates in mycotoxin biosynthesis. In terms of biological role, dehydrogenase; part of the gene cluster that mediates the biosynthesis of fusaric acid, a mycotoxin with low to moderate toxicity to animals and humans, but with high phytotoxic properties. L-aspartate is suggested as fusaric acid amino acid precursor that is activated and further processed to O-acetyl-L-homoserine by cluster enzymes aspartate kinase FUB3 and homoserine O-acetyltransferase FUB5, as well as enzymes of the primary metabolism. The polyketide synthase (PKS) FUB1 generates the triketide trans-2-hexenal which is presumptively released by the hydrolase FUB4 and linked to the NRPS-bound amino acid precursor by NAD(P)-dependent dehydrogenase FUB6. FUB1, FUB4, and the non-canonical NRPS Fub8 may form an enzyme complex. Further processing of the NRPS-bound intermediate might be carried out by FUB6 and the O-acetylhomoserine FUB7, enabling a spontaneous electrocyclization to close the carbon backbone of fusaric acid. Dihydrofusaric acid is likely to be released via reduction by the thioester reductase (TR) domain of FUB8 whereupon the final oxidation to fusaric acid may (also) be performed by the FMN-dependent dehydrogenase FUB9. In Gibberella fujikuroi (strain CBS 195.34 / IMI 58289 / NRRL A-6831) (Bakanae and foot rot disease fungus), this protein is Dehydrogenase FUB6.